We begin with the raw amino-acid sequence, 304 residues long: Protease HtpX homolog 1 (304 aa).

Helical transmembrane passes span 17–37 and 39–59; these read VTLF…IALL and SWVL…WFSD. Histidine 140 serves as a coordination point for Zn(2+). Glutamate 141 is an active-site residue. Zn(2+) is bound at residue histidine 144. Helical transmembrane passes span 151–171 and 186–206; these read AVIT…RFAF and AVLA…FLLI. Glutamate 214 serves as a coordination point for Zn(2+).

The protein belongs to the peptidase M48B family. Zn(2+) serves as cofactor.

It is found in the cell membrane. The chain is Protease HtpX homolog 1 from Streptomyces coelicolor (strain ATCC BAA-471 / A3(2) / M145).